Consider the following 668-residue polypeptide: Golgin candidate 2 (668 aa).

The tract at residues 22–317 is disordered; it reads QAADSLRKDE…RQREERRRRR (296 aa). The segment covering 26–39 has biased composition (basic and acidic residues); it reads SLRKDEKSETHDEV. 2 stretches are compositionally biased toward polar residues: residues 64–86 and 100–113; these read GSDS…LSSS and SAPS…NTKL. Low complexity-rich tracts occupy residues 123–141 and 168–178; these read STPN…GGTS and SSSSNVVNSRG. Basic and acidic residues-rich tracts occupy residues 184-207, 215-237, and 250-259; these read TNKE…RNAP, THKE…RRSA, and GKRDGRESRR. The span at 290-302 shows a compositional bias: acidic residues; sequence DESESDYESDSST. Residues 303–312 show a composition bias toward basic and acidic residues; sequence DSERERQREE. Positions 331–539 form a coiled coil; sequence AVIKERENMV…SQVEALSSEK (209 aa). Transmembrane regions (helical) follow at residues 594–614 and 622–642; these read KHLG…TVFL and IWAV…LLSH.

It is found in the golgi apparatus membrane. In terms of biological role, golgi matrix protein playing a role in tethering of vesicles to Golgi membranes and in maintaining the overall structure of the Golgi apparatus. This is Golgin candidate 2 (GC2) from Arabidopsis thaliana (Mouse-ear cress).